The chain runs to 575 residues: MSTSSLRRQMKNIVHNYSEAEIKVREATSNDPWGPSSSLMSEIADLTYNVVAFSEIMSMIWKRLNDHGKNWRHVYKAMTLMEYLIKTGSERVSQQCKENMYAVQTLKDFQYVDRDGKDQGVNVREKAKQLVALLRDEDRLREERAHALKTKEKLAQTATASSAAVGSGPPPEAEQAWPQSSGEEELQLQLALAMSKEEADQPPSCGPEDDVQLQLALSLSREEHDKEERIRRGDDLRLQMAIEESKRETGGKEESSLMDLADVFTTPAPPQASDPWGGPASVPTAVPVAAAASDPWGGPAVPPAADPWGGAAPTPASGDPWRPAAPTGPSVDPWGGTPAPAAGEGPTPDPWGSSDGGAPVSGPPSSDPWAPAPAFSDPWGGSPAKPSSNGTAVGGFDTEPDEFSDFDRLRTALPTSGSSTGELELLAGEVPARSPGAFDMSGVGGSLAESVGSPPPAATPTPTPPTRKTPESFLGPNAALVDLDSLVSRPGPTPPGSKASNPFLPSGAPPTGPSVTNPFQPAPPATLTLNQLRLSPVPPVPGAPPTYISPLGGGPGLPPMMPPGPPAPNTNPFLL.

Residues Lys-11, Arg-25, Asn-30, Arg-63, and His-73 each coordinate a 1,2-diacyl-sn-glycero-3-phospho-(1D-myo-inositol-4,5-bisphosphate). The ENTH domain maps to 12 to 144 (NIVHNYSEAE…RDEDRLREER (133 aa)). The segment at 150-186 (TKEKLAQTATASSAAVGSGPPPEAEQAWPQSSGEEEL) is disordered. Residues 157 to 167 (TATASSAAVGS) show a composition bias toward low complexity. 3 consecutive UIM domains span residues 183-202 (EEEL…ADQP), 208-227 (EDDV…HDKE), and 233-252 (GDDL…TGGK). The tract at residues 264–575 (FTTPAPPQAS…PAPNTNPFLL (312 aa)) is disordered. 8 repeat units span residues 274–276 (DPW), 294–296 (DPW), 306–308 (DPW), 319–321 (DPW), 332–334 (DPW), 349–351 (DPW), 367–369 (DPW), and 377–379 (DPW). Residues 274–379 (DPWGGPASVP…APAPAFSDPW (106 aa)) are 8 X 3 AA repeats of D-P-W. 2 stretches are compositionally biased toward low complexity: residues 279–299 (PASV…WGGP) and 306–316 (DPWGGAAPTPA). The span at 332 to 346 (DPWGGTPAPAAGEGP) shows a compositional bias: low complexity. Low complexity predominate over residues 367–379 (DPWAPAPAFSDPW). A Phosphoserine modification is found at Ser-382. A [DE]-X(1,2)-F-X-X-[FL]-X-X-X-R motif motif is present at residues 401–410 (DEFSDFDRLR). Phosphoserine occurs at positions 418 and 419. Thr-420 is modified (phosphothreonine). A phosphoserine mark is found at Ser-434, Ser-446, and Ser-453. A compositionally biased stretch (pro residues) spans 453 to 467 (SPPPAATPTPTPPTR). Phosphothreonine is present on residues Thr-459, Thr-463, and Thr-469. Phosphoserine is present on Ser-472. Thr-493 is modified (phosphothreonine). Repeat copies occupy residues 501 to 503 (NPF) and 517 to 519 (NPF). A 3 X 3 AA repeats of N-P-F region spans residues 501–573 (NPFLPSGAPP…GPPAPNTNPF (73 aa)). Arg-533 is subject to Omega-N-methylarginine. The segment covering 556-569 (GLPPMMPPGPPAPN) has biased composition (pro residues). The stretch at 571–573 (NPF) is repeat 3.

Belongs to the epsin family. As to quaternary structure, monomer. Binds clathrin and ZBTB16/ZNF145. Binds ubiquitinated proteins. Interacts with RALBP1 in a complex also containing NUMB and TFAP2A during interphase and mitosis. Interacts with AP2B1. Interacts with UBQLN2. Interacts with ITSN1. Interacts with AP2A1 and AP2A2. Interacts with REPS2; the interaction is direct. Interacts with EPS15; the interaction is direct. Interacts with ENTREP1. Post-translationally, phosphorylated on serine and/or threonine residues in mitotic cells. Phosphorylation reduces interaction with REPS2, AP-2 and the membrane fraction. Depolarization of synaptosomes results in dephosphorylation. In terms of processing, ubiquitinated.

It is found in the cytoplasm. Its subcellular location is the cell membrane. The protein resides in the nucleus. The protein localises to the membrane. It localises to the clathrin-coated pit. Functionally, binds to membranes enriched in phosphatidylinositol 4,5-bisphosphate (PtdIns(4,5)P2). Modifies membrane curvature and facilitates the formation of clathrin-coated invaginations. Regulates receptor-mediated endocytosis. This Mus musculus (Mouse) protein is Epsin-1 (Epn1).